An 899-amino-acid chain; its full sequence is Translation initiation factor IF-2 (899 aa).

2 disordered regions span residues 65–84 (KTRS…SVQI) and 91–310 (TYVK…SFNK). Polar residues predominate over residues 68–82 (STLNVPSTGGKSKSV). The span at 108-164 (QARREAEEQAQRAAEEQAKREAELREAAEKAKRAADEQAKREAAEKAKRDVAEKEKV) shows a compositional bias: basic and acidic residues. Polar residues predominate over residues 165–174 (TNQQNENMTK). Residues 177–236 (QAEKAKREAEAAELKRKAEEAARLKVEEEARRIAEEARRMAEENAGRWEAESAKPEESAD) are compositionally biased toward basic and acidic residues. Positions 262-276 (SRSRAGKVTKQKKGN) are enriched in basic residues. Over residues 277–290 (RQSESKADREEARA) the composition is skewed to basic and acidic residues. The region spanning 398–567 (ARAPVVTIMG…LLQAEVLELK (170 aa)) is the tr-type G domain. Residues 407 to 414 (GHVDHGKT) form a G1 region. 407 to 414 (GHVDHGKT) serves as a coordination point for GTP. The segment at 432–436 (GITQH) is G2. Residues 453–456 (DTPG) are G3. GTP-binding positions include 453–457 (DTPGH) and 507–510 (NKID). The interval 507–510 (NKID) is G4. The tract at residues 543-545 (SAK) is G5.

The protein belongs to the TRAFAC class translation factor GTPase superfamily. Classic translation factor GTPase family. IF-2 subfamily.

The protein resides in the cytoplasm. One of the essential components for the initiation of protein synthesis. Protects formylmethionyl-tRNA from spontaneous hydrolysis and promotes its binding to the 30S ribosomal subunits. Also involved in the hydrolysis of GTP during the formation of the 70S ribosomal complex. The chain is Translation initiation factor IF-2 from Pectobacterium carotovorum subsp. carotovorum (strain PC1).